Here is a 181-residue protein sequence, read N- to C-terminus: MSFSDQNLIWIDLEMTGLDPEMHKIIEMATIVTDSELNILAEGPVIAIHQPESELAKMDEWCTTTHTASGLVARVRQSQVSEEEAIDQTLAFLKQWVPEGKSPICGNSIGQDRRFLYKHMPRLEAYFHYRYIDVSTIKELTRRWQPEVLKEFSKTGSHLALDDIRESIAELQFYRKAVFKI.

One can recognise an Exonuclease domain in the interval leucine 8–leucine 171. Residue tyrosine 129 is part of the active site.

It belongs to the oligoribonuclease family.

The protein resides in the cytoplasm. Its function is as follows. 3'-to-5' exoribonuclease specific for small oligoribonucleotides. This Vibrio cholerae serotype O1 (strain ATCC 39541 / Classical Ogawa 395 / O395) protein is Oligoribonuclease.